The chain runs to 397 residues: Mitochondrial inner membrane magnesium transporter LPE10 (397 aa).

The N-terminal 37 residues, Met-1 to Ser-37, are a transit peptide targeting the mitochondrion. A helical membrane pass occupies residues Leu-316–Ile-336. Residues Tyr-340 to Asn-343 carry the YGMN motif. A helical membrane pass occupies residues Gly-354–Ile-374.

The protein belongs to the CorA metal ion transporter (MIT) (TC 1.A.35) family. As to quaternary structure, forms homooligomers. Interacts with MRS2.

The protein resides in the mitochondrion inner membrane. Functionally, mitochondrial inner membrane magnesium transporter required for mitochondrial magnesium homeostasis. Modulates the conductance of the MRS2 channel. Involved in the splicing of mRNA group II introns in mitochondria by affecting mitochondrial magnesium concentrations, which are critical for group II intron splicing. In Candida glabrata (strain ATCC 2001 / BCRC 20586 / JCM 3761 / NBRC 0622 / NRRL Y-65 / CBS 138) (Yeast), this protein is Mitochondrial inner membrane magnesium transporter LPE10 (LPE10).